The following is a 235-amino-acid chain: Probable WRKY transcription factor 66 (235 aa).

Positions 79–147 (SPTPAHIDGF…YVGQHACEAP (69 aa)) form a DNA-binding region, WRKY.

It belongs to the WRKY group III family.

It localises to the nucleus. Transcription factor. Interacts specifically with the W box (5'-(T)TGAC[CT]-3'), a frequently occurring elicitor-responsive cis-acting element. The sequence is that of Probable WRKY transcription factor 66 (WRKY66) from Arabidopsis thaliana (Mouse-ear cress).